The sequence spans 108 residues: Small ribosomal subunit protein uS17 (108 aa).

The protein belongs to the universal ribosomal protein uS17 family. In terms of assembly, part of the 30S ribosomal subunit.

One of the primary rRNA binding proteins, it binds specifically to the 5'-end of 16S ribosomal RNA. The protein is Small ribosomal subunit protein uS17 of Methanocorpusculum labreanum (strain ATCC 43576 / DSM 4855 / Z).